The following is a 163-amino-acid chain: 6,7-dimethyl-8-ribityllumazine synthase (163 aa).

5-amino-6-(D-ribitylamino)uracil-binding positions include phenylalanine 27, 58-60, and 87-89; these read ALE and CVV. A (2S)-2-hydroxy-3-oxobutyl phosphate-binding site is contributed by 92–93; that stretch reads DT. Histidine 95 acts as the Proton donor in catalysis. 5-amino-6-(D-ribitylamino)uracil is bound at residue asparagine 120. Arginine 134 lines the (2S)-2-hydroxy-3-oxobutyl phosphate pocket.

Belongs to the DMRL synthase family.

It catalyses the reaction (2S)-2-hydroxy-3-oxobutyl phosphate + 5-amino-6-(D-ribitylamino)uracil = 6,7-dimethyl-8-(1-D-ribityl)lumazine + phosphate + 2 H2O + H(+). It participates in cofactor biosynthesis; riboflavin biosynthesis; riboflavin from 2-hydroxy-3-oxobutyl phosphate and 5-amino-6-(D-ribitylamino)uracil: step 1/2. Catalyzes the formation of 6,7-dimethyl-8-ribityllumazine by condensation of 5-amino-6-(D-ribitylamino)uracil with 3,4-dihydroxy-2-butanone 4-phosphate. This is the penultimate step in the biosynthesis of riboflavin. This Nitrobacter winogradskyi (strain ATCC 25391 / DSM 10237 / CIP 104748 / NCIMB 11846 / Nb-255) protein is 6,7-dimethyl-8-ribityllumazine synthase.